A 364-amino-acid polypeptide reads, in one-letter code: MEIRYTPKELTKLPRTVEYKNKSVYMINQRLLPKEFKVEKFSKVEEVAEAIKNMTVRGAPAIGAAAGFGLALYAETSKAKTKEEFLDGFEKAYEILKNTRPTAVNLFWALNRIKKLVEEHSEDPLDEIKRLIVQEAYKIADEDVEANLRMGHYGAEVLPEGNILTHCNAGSLATVHLGTVGSVVRVMHKDGSLKLLWLDETRPVLQGARLSAWEYSYDGLNVKLIADNAAAFVMQQGFVDAIIVGADRIVANGDFANKIGTYMLAVLAREHGIPFFAVAPLSSIDMELKSGKDIPIEERSPEEVLTCGGCRIAPDVPVYNPAFDVTPHKYLTGIITDRGVVWPPFKRNLKKLFEVNKSGGDEAV.

Residues 57 to 59, Arg-100, and Gln-206 each bind substrate; that span reads RGA. Catalysis depends on Asp-247, which acts as the Proton donor. 257 to 258 contacts substrate; it reads NK.

It belongs to the eIF-2B alpha/beta/delta subunits family. MtnA subfamily.

The catalysed reaction is 5-(methylsulfanyl)-alpha-D-ribose 1-phosphate = 5-(methylsulfanyl)-D-ribulose 1-phosphate. In terms of biological role, catalyzes the interconversion of methylthioribose-1-phosphate (MTR-1-P) into methylthioribulose-1-phosphate (MTRu-1-P). The polypeptide is Putative methylthioribose-1-phosphate isomerase (Pyrococcus horikoshii (strain ATCC 700860 / DSM 12428 / JCM 9974 / NBRC 100139 / OT-3)).